A 431-amino-acid chain; its full sequence is Glutamate-1-semialdehyde 2,1-aminomutase (431 aa).

At lysine 269 the chain carries N6-(pyridoxal phosphate)lysine.

It belongs to the class-III pyridoxal-phosphate-dependent aminotransferase family. HemL subfamily. As to quaternary structure, homodimer. The cofactor is pyridoxal 5'-phosphate.

The protein localises to the cytoplasm. The enzyme catalyses (S)-4-amino-5-oxopentanoate = 5-aminolevulinate. It functions in the pathway porphyrin-containing compound metabolism; protoporphyrin-IX biosynthesis; 5-aminolevulinate from L-glutamyl-tRNA(Glu): step 2/2. It participates in porphyrin-containing compound metabolism; chlorophyll biosynthesis. The chain is Glutamate-1-semialdehyde 2,1-aminomutase from Prosthecochloris aestuarii (strain DSM 271 / SK 413).